Reading from the N-terminus, the 588-residue chain is Serine/threonine-protein phosphatase 2A 65 kDa regulatory subunit A alpha isoform (588 aa).

14 HEAT repeats span residues 2-42, 44-80, 81-119, 158-196, 197-235, 236-274, 275-313, 315-352, 353-391, 393-430, 432-469, 470-508, 509-547, and 549-586; these read AMVD…ALGE, RTRK…FVGG, IEFA…QMKE, DVLK…TVES, TFLI…LLEP, QDCV…AVGP, DCTR…LLNP, LAIQ…ILGK, DSTI…VIGI, LLSQ…QLGI, FFDD…EFGP, EWAM…VMGS, EITC…IVDQ, and VVDK…STAA.

Belongs to the phosphatase 2A regulatory subunit A family. As to quaternary structure, PP2A consists of a common heterodimeric core enzyme, composed of a 36 kDa catalytic subunit (subunit C) and a 65 kDa constant regulatory subunit (subunit A), that associates with a variety of regulatory subunits such as subunits B (the R2/B/PR55/B55, R3/B''/PR72/PR130/PR59 and R5/B'/B56 families) and the regulatory subunits TON2. Interacts with CYP20-1/ROC7. Also interacts with phosphatidic acid (PA), a lipid signaling molecule. Interacts with CHIP. Interacts with SIC/RON3. Post-translationally, ubiquitinated. CHIP-mediated ubiquitination enhances phosphatase activity after an abiotic stress such as low temperature or darkness. As to expression, mostly expressed in cell-dividing tissues such as apical meristems. Ubiquitous, with higher levels in roots and flowers (at protein level).

It is found in the cytoplasm. It localises to the cytosol. The protein localises to the nucleus. Its function is as follows. The A subunit of protein phosphatase 2A serves as a scaffolding molecule to coordinate the assembly of the catalytic subunit and a variable regulatory B subunit. Seems to act as a positive regulator of PP2A catalytic activity. Confers resistance to phosphatase inhibitors such as okadaic acid and cantharidin. Involved during developmental process such as seedling and floral developments, root gravitropism, and stomatal opening regulation. Involved in the regulation of auxin efflux, especially during basipetal (tips to base) auxin transport in roots, and appears to contribute to the perception of auxin efflux inhibitors such as 1-N-naphthylphthalamic acid (NPA) and to semicarbazone I (substituted phenylsemicarbazone of 2-acetylarylcarboxylic acids) (SCB-I). Modulates the magnitude of ethylene response in the hypocotyl and stem, and functions as a general positive transducer of early ABA signaling. The holoenzyme composed of PP2AA1, PP2A4 and B'ZETA or B'ETA acts as a negative regulator of plant innate immunity by controlling BAK1 phosphorylation state and activation in surface-localized immune receptor complexes. This Arabidopsis thaliana (Mouse-ear cress) protein is Serine/threonine-protein phosphatase 2A 65 kDa regulatory subunit A alpha isoform (PP2AA1).